The primary structure comprises 561 residues: Magnesium-chelatase 60 kDa subunit (561 aa).

Disordered regions lie at residues 234-268 (PLQE…DPLD) and 298-324 (RAAS…SRKG). A compositionally biased stretch (pro residues) spans 237–249 (EAPPPPPPPPEPP). Residues 250–265 (EPNEGENQQDEQDQID) are compositionally biased toward acidic residues. Positions 314-323 (RRGRPLPSRK) are enriched in basic residues. In terms of domain architecture, VWFA spans 379–559 (VLIFAVDASG…KMADVLGAAL (181 aa)).

Belongs to the Mg-chelatase subunits D/I family.

It catalyses the reaction protoporphyrin IX + Mg(2+) + ATP + H2O = Mg-protoporphyrin IX + ADP + phosphate + 3 H(+). Its pathway is porphyrin-containing compound metabolism; bacteriochlorophyll biosynthesis. Functionally, involved in bacteriochlorophyll biosynthesis; introduces a magnesium ion into protoporphyrin IX to yield Mg-protoporphyrin IX. The sequence is that of Magnesium-chelatase 60 kDa subunit (bchD) from Rhodobacter capsulatus (strain ATCC BAA-309 / NBRC 16581 / SB1003).